The primary structure comprises 289 residues: Nucleotide-binding protein Franean1_2060 (289 aa).

An ATP-binding site is contributed by 13–20; sequence GLSGAGRS. 64–67 is a binding site for GTP; that stretch reads DVRG.

It belongs to the RapZ-like family.

Displays ATPase and GTPase activities. The chain is Nucleotide-binding protein Franean1_2060 from Parafrankia sp. (strain EAN1pec).